A 976-amino-acid polypeptide reads, in one-letter code: Protein PLASTID MOVEMENT IMPAIRED 1-RELATED 2 (976 aa).

The 149-residue stretch at 81–229 (IAHFGQRRFD…VLNLSFDYSV (149 aa)) folds into the C2 NT-type domain. Positions 309 to 319 (KQAADSDDSGK) are enriched in basic and acidic residues. Disordered regions lie at residues 309 to 343 (KQAA…ESSR) and 381 to 419 (NLLP…STEK). Over residues 394 to 414 (STFSSQVISESSESKSPSAMD) the composition is skewed to low complexity.

Seems not necessary for chloroplast and nuclear photorelocation movements. The protein is Protein PLASTID MOVEMENT IMPAIRED 1-RELATED 2 of Arabidopsis thaliana (Mouse-ear cress).